Consider the following 291-residue polypeptide: Lipoyl synthase 1 (291 aa).

Residues Cys-34, Cys-39, Cys-45, Cys-60, Cys-64, Cys-67, and Ser-274 each contribute to the [4Fe-4S] cluster site. The region spanning Phe-46–Leu-263 is the Radical SAM core domain.

Belongs to the radical SAM superfamily. Lipoyl synthase family. The cofactor is [4Fe-4S] cluster.

It is found in the cytoplasm. It catalyses the reaction [[Fe-S] cluster scaffold protein carrying a second [4Fe-4S](2+) cluster] + N(6)-octanoyl-L-lysyl-[protein] + 2 oxidized [2Fe-2S]-[ferredoxin] + 2 S-adenosyl-L-methionine + 4 H(+) = [[Fe-S] cluster scaffold protein] + N(6)-[(R)-dihydrolipoyl]-L-lysyl-[protein] + 4 Fe(3+) + 2 hydrogen sulfide + 2 5'-deoxyadenosine + 2 L-methionine + 2 reduced [2Fe-2S]-[ferredoxin]. It participates in protein modification; protein lipoylation via endogenous pathway; protein N(6)-(lipoyl)lysine from octanoyl-[acyl-carrier-protein]: step 2/2. Catalyzes the radical-mediated insertion of two sulfur atoms into the C-6 and C-8 positions of the octanoyl moiety bound to the lipoyl domains of lipoate-dependent enzymes, thereby converting the octanoylated domains into lipoylated derivatives. The sequence is that of Lipoyl synthase 1 from Nostoc sp. (strain PCC 7120 / SAG 25.82 / UTEX 2576).